Consider the following 1323-residue polypeptide: Phosphoribosylformylglycinamidine synthase (1323 aa).

ATP is bound by residues 312–323, 391–393, and alanine 691; these read GAATGSGGEIRD and NGY. 4 residues coordinate Mg(2+): aspartate 692, glutamate 733, asparagine 737, and aspartate 903. An ATP-binding site is contributed by serine 905. Residues 1062 to 1306 form the Glutamine amidotransferase type-1 domain; the sequence is VAILREQGVN…YPHSKASEWG (245 aa). The Nucleophile role is filled by cysteine 1156. Active-site residues include histidine 1284 and glutamate 1286.

This sequence in the N-terminal section; belongs to the FGAMS family.

Its subcellular location is the cytoplasm. The catalysed reaction is N(2)-formyl-N(1)-(5-phospho-beta-D-ribosyl)glycinamide + L-glutamine + ATP + H2O = 2-formamido-N(1)-(5-O-phospho-beta-D-ribosyl)acetamidine + L-glutamate + ADP + phosphate + H(+). It participates in purine metabolism; IMP biosynthesis via de novo pathway; 5-amino-1-(5-phospho-D-ribosyl)imidazole from N(2)-formyl-N(1)-(5-phospho-D-ribosyl)glycinamide: step 1/2. Phosphoribosylformylglycinamidine synthase involved in the purines biosynthetic pathway. Catalyzes the ATP-dependent conversion of formylglycinamide ribonucleotide (FGAR) and glutamine to yield formylglycinamidine ribonucleotide (FGAM) and glutamate. In Schizosaccharomyces pombe (strain 972 / ATCC 24843) (Fission yeast), this protein is Phosphoribosylformylglycinamidine synthase (ade3).